The primary structure comprises 57 residues: Lantibiotic nisin-A (57 aa).

The propeptide occupies 1-23; the sequence is MSTKDFNLDLVSVSKKDSGASPR. Thr-25 is subject to (Z)-2,3-didehydrobutyrine. Residues 26–30 constitute a cross-link (lanthionine (Ser-Cys)); the sequence is SISLC. Ser-28 carries the 2,3-didehydroalanine (Ser) modification. 4 consecutive cross-links (beta-methyllanthionine (Thr-Cys)) follow at residues 31 to 34, 36 to 42, 46 to 49, and 48 to 51; these read TPGC, TGALMGC, TATC, and TCHC. Ser-56 carries the post-translational modification 2,3-didehydroalanine (Ser).

This sequence belongs to the type A lantibiotic family. In terms of processing, maturation of lantibiotics involves the enzymatic conversion of Thr, and Ser into dehydrated AA and the formation of thioether bonds with cysteine. This is followed by membrane translocation and cleavage of the modified precursor. Post-translationally, the structure of the 2,3-didehydrobutyrine is not discussed in PubMed:8454055. However, in Fig. 1 the residue is diagrammed as the Z-isomer.

Its function is as follows. Lanthionine-containing peptide antibiotic (lantibiotic) active on Gram-positive bacteria. The bactericidal activity of lantibiotics is based on depolarization of energized bacterial cytoplasmic membranes, initiated by the formation of aqueous transmembrane pores. The polypeptide is Lantibiotic nisin-A (spaN) (Lactococcus lactis subsp. lactis (Streptococcus lactis)).